We begin with the raw amino-acid sequence, 79 residues long: UPF0154 protein llmg_1186 (79 aa).

A helical transmembrane segment spans residues 4–24 (ILAILLMVVCLLAGFFLGTWF).

It belongs to the UPF0154 family.

The protein localises to the cell membrane. This Lactococcus lactis subsp. cremoris (strain MG1363) protein is UPF0154 protein llmg_1186.